Reading from the N-terminus, the 143-residue chain is Large ribosomal subunit protein uL16 (143 aa).

Over residues 1–17 (MLQPKRTKFRKAHKGRI) the composition is skewed to basic residues. Positions 1–21 (MLQPKRTKFRKAHKGRIHGNA) are disordered.

Belongs to the universal ribosomal protein uL16 family. As to quaternary structure, part of the 50S ribosomal subunit.

In terms of biological role, binds 23S rRNA and is also seen to make contacts with the A and possibly P site tRNAs. The protein is Large ribosomal subunit protein uL16 of Rhizorhabdus wittichii (strain DSM 6014 / CCUG 31198 / JCM 15750 / NBRC 105917 / EY 4224 / RW1) (Sphingomonas wittichii).